The sequence spans 118 residues: DNA-binding protein Msm_0708 (118 aa).

The disordered stretch occupies residues 16–39 (EARQAAAQGQMQQQAQQQMQQQEA). Over residues 18–39 (RQAAAQGQMQQQAQQQMQQQEA) the composition is skewed to low complexity.

Belongs to the PDCD5 family.

This Methanobrevibacter smithii (strain ATCC 35061 / DSM 861 / OCM 144 / PS) protein is DNA-binding protein Msm_0708.